The chain runs to 426 residues: 3-phosphoshikimate 1-carboxyvinyltransferase (426 aa).

Positions 22, 23, and 27 each coordinate 3-phosphoshikimate. Phosphoenolpyruvate is bound at residue Lys22. Residues Gly96 and Arg124 each contribute to the phosphoenolpyruvate site. Ser170, Ser171, Gln172, Ser198, Asp314, Asn337, and Lys341 together coordinate 3-phosphoshikimate. Residue Gln172 participates in phosphoenolpyruvate binding. Asp314 (proton acceptor) is an active-site residue. Residues Arg345, Arg387, and Lys412 each contribute to the phosphoenolpyruvate site.

This sequence belongs to the EPSP synthase family. As to quaternary structure, monomer.

The protein localises to the cytoplasm. It carries out the reaction 3-phosphoshikimate + phosphoenolpyruvate = 5-O-(1-carboxyvinyl)-3-phosphoshikimate + phosphate. It functions in the pathway metabolic intermediate biosynthesis; chorismate biosynthesis; chorismate from D-erythrose 4-phosphate and phosphoenolpyruvate: step 6/7. Catalyzes the transfer of the enolpyruvyl moiety of phosphoenolpyruvate (PEP) to the 5-hydroxyl of shikimate-3-phosphate (S3P) to produce enolpyruvyl shikimate-3-phosphate and inorganic phosphate. The sequence is that of 3-phosphoshikimate 1-carboxyvinyltransferase from Shewanella woodyi (strain ATCC 51908 / MS32).